We begin with the raw amino-acid sequence, 368 residues long: Peptide chain release factor 2 (368 aa).

Gln-250 bears the N5-methylglutamine mark.

Belongs to the prokaryotic/mitochondrial release factor family. Post-translationally, methylated by PrmC. Methylation increases the termination efficiency of RF2.

It localises to the cytoplasm. Peptide chain release factor 2 directs the termination of translation in response to the peptide chain termination codons UGA and UAA. The sequence is that of Peptide chain release factor 2 from Chlamydia trachomatis serovar L2b (strain UCH-1/proctitis).